The primary structure comprises 123 residues: Small ribosomal subunit protein uS13 (123 aa).

Positions 95-123 (GLPVRGQKTKTNARTRKGPKRAISGKKNK) are disordered.

This sequence belongs to the universal ribosomal protein uS13 family. In terms of assembly, part of the 30S ribosomal subunit. Forms a loose heterodimer with protein S19. Forms two bridges to the 50S subunit in the 70S ribosome.

Located at the top of the head of the 30S subunit, it contacts several helices of the 16S rRNA. In the 70S ribosome it contacts the 23S rRNA (bridge B1a) and protein L5 of the 50S subunit (bridge B1b), connecting the 2 subunits; these bridges are implicated in subunit movement. Contacts the tRNAs in the A and P-sites. This Clostridium novyi (strain NT) protein is Small ribosomal subunit protein uS13.